A 286-amino-acid polypeptide reads, in one-letter code: Bifunctional protein FolD (286 aa).

Residues 164–166, Ser-193, and Ile-234 each bind NADP(+); that span reads GRS.

Belongs to the tetrahydrofolate dehydrogenase/cyclohydrolase family. In terms of assembly, homodimer.

The catalysed reaction is (6R)-5,10-methylene-5,6,7,8-tetrahydrofolate + NADP(+) = (6R)-5,10-methenyltetrahydrofolate + NADPH. It catalyses the reaction (6R)-5,10-methenyltetrahydrofolate + H2O = (6R)-10-formyltetrahydrofolate + H(+). It participates in one-carbon metabolism; tetrahydrofolate interconversion. Functionally, catalyzes the oxidation of 5,10-methylenetetrahydrofolate to 5,10-methenyltetrahydrofolate and then the hydrolysis of 5,10-methenyltetrahydrofolate to 10-formyltetrahydrofolate. The polypeptide is Bifunctional protein FolD (Oleidesulfovibrio alaskensis (strain ATCC BAA-1058 / DSM 17464 / G20) (Desulfovibrio alaskensis)).